Here is a 213-residue protein sequence, read N- to C-terminus: Orotate phosphoribosyltransferase (213 aa).

Lys-26 serves as a coordination point for 5-phospho-alpha-D-ribose 1-diphosphate. Phe-34–Phe-35 lines the orotate pocket. 5-phospho-alpha-D-ribose 1-diphosphate is bound by residues Tyr-72 to Lys-73, Arg-99, Lys-100, Lys-103, His-105, and Asp-124 to Ala-132. Residues Thr-128 and Arg-156 each contribute to the orotate site.

The protein belongs to the purine/pyrimidine phosphoribosyltransferase family. PyrE subfamily. As to quaternary structure, homodimer. It depends on Mg(2+) as a cofactor.

It carries out the reaction orotidine 5'-phosphate + diphosphate = orotate + 5-phospho-alpha-D-ribose 1-diphosphate. The protein operates within pyrimidine metabolism; UMP biosynthesis via de novo pathway; UMP from orotate: step 1/2. Catalyzes the transfer of a ribosyl phosphate group from 5-phosphoribose 1-diphosphate to orotate, leading to the formation of orotidine monophosphate (OMP). In Pseudomonas syringae pv. tomato (strain ATCC BAA-871 / DC3000), this protein is Orotate phosphoribosyltransferase.